The chain runs to 338 residues: DNA-directed RNA polymerase subunit alpha (338 aa).

The tract at residues 1 to 234 (MIHKNWQELI…DQLSIFVNFD (234 aa)) is alpha N-terminal domain (alpha-NTD). An alpha C-terminal domain (alpha-CTD) region spans residues 250-338 (FNPLLLKKVD…ELAKKYEDNF (89 aa)).

The protein belongs to the RNA polymerase alpha chain family. In terms of assembly, homodimer. The RNAP catalytic core consists of 2 alpha, 1 beta, 1 beta' and 1 omega subunit. When a sigma factor is associated with the core the holoenzyme is formed, which can initiate transcription.

It carries out the reaction RNA(n) + a ribonucleoside 5'-triphosphate = RNA(n+1) + diphosphate. DNA-dependent RNA polymerase catalyzes the transcription of DNA into RNA using the four ribonucleoside triphosphates as substrates. The polypeptide is DNA-directed RNA polymerase subunit alpha (Jannaschia sp. (strain CCS1)).